A 505-amino-acid polypeptide reads, in one-letter code: Acetyl-coenzyme A carboxylase carboxyl transferase subunit beta, chloroplastic (505 aa).

The segment covering Glu189–Gly205 has biased composition (low complexity). The disordered stretch occupies residues Glu189–Arg213. The CoA carboxyltransferase N-terminal domain maps to Leu228 to Ser499. Positions 232, 235, 251, and 254 each coordinate Zn(2+). A C4-type zinc finger spans residues Cys232 to Cys254.

This sequence belongs to the AccD/PCCB family. As to quaternary structure, acetyl-CoA carboxylase is a heterohexamer composed of biotin carboxyl carrier protein, biotin carboxylase and 2 subunits each of ACCase subunit alpha and ACCase plastid-coded subunit beta (accD). Requires Zn(2+) as cofactor.

Its subcellular location is the plastid. It is found in the chloroplast stroma. The enzyme catalyses N(6)-carboxybiotinyl-L-lysyl-[protein] + acetyl-CoA = N(6)-biotinyl-L-lysyl-[protein] + malonyl-CoA. It functions in the pathway lipid metabolism; malonyl-CoA biosynthesis; malonyl-CoA from acetyl-CoA: step 1/1. Functionally, component of the acetyl coenzyme A carboxylase (ACC) complex. Biotin carboxylase (BC) catalyzes the carboxylation of biotin on its carrier protein (BCCP) and then the CO(2) group is transferred by the transcarboxylase to acetyl-CoA to form malonyl-CoA. The sequence is that of Acetyl-coenzyme A carboxylase carboxyl transferase subunit beta, chloroplastic from Calycanthus floridus var. glaucus (Eastern sweetshrub).